The sequence spans 510 residues: Light-independent protochlorophyllide reductase subunit B (510 aa).

Asp-36 is a [4Fe-4S] cluster binding site. Asp-296 acts as the Proton donor in catalysis. 431 to 432 contributes to the substrate binding site; the sequence is GM.

Belongs to the ChlB/BchB/BchZ family. As to quaternary structure, protochlorophyllide reductase is composed of three subunits; ChlL, ChlN and ChlB. Forms a heterotetramer of two ChlB and two ChlN subunits. [4Fe-4S] cluster serves as cofactor.

The catalysed reaction is chlorophyllide a + oxidized 2[4Fe-4S]-[ferredoxin] + 2 ADP + 2 phosphate = protochlorophyllide a + reduced 2[4Fe-4S]-[ferredoxin] + 2 ATP + 2 H2O. It participates in porphyrin-containing compound metabolism; chlorophyll biosynthesis (light-independent). In terms of biological role, component of the dark-operative protochlorophyllide reductase (DPOR) that uses Mg-ATP and reduced ferredoxin to reduce ring D of protochlorophyllide (Pchlide) to form chlorophyllide a (Chlide). This reaction is light-independent. The NB-protein (ChlN-ChlB) is the catalytic component of the complex. The protein is Light-independent protochlorophyllide reductase subunit B of Synechococcus sp. (strain JA-3-3Ab) (Cyanobacteria bacterium Yellowstone A-Prime).